Consider the following 238-residue polypeptide: Probable succinyl-CoA:3-ketoacid coenzyme A transferase subunit A (238 aa).

24–30 is a binding site for CoA; sequence GGFGLCG.

It belongs to the 3-oxoacid CoA-transferase subunit A family. In terms of assembly, heterodimer of a subunit A and a subunit B.

The enzyme catalyses a 3-oxo acid + succinyl-CoA = a 3-oxoacyl-CoA + succinate. In Bacillus subtilis (strain 168), this protein is Probable succinyl-CoA:3-ketoacid coenzyme A transferase subunit A (scoA).